We begin with the raw amino-acid sequence, 766 residues long: Exocyst complex component 6 (766 aa).

The stretch at 28–90 (NTKQIGDQLE…SLDTSLRQIS (63 aa)) forms a coiled coil.

The protein belongs to the SEC15 family. As to quaternary structure, the exocyst complex is composed of Sec3/Exoc1, Sec5/Exoc2, Sec6/Exoc3, Sec8/Exoc4, Sec10/Exoc5, Sec15/Exoc6, Exo70/Exoc7 and Exo84/Exoc8. Interacts with RAB3, RAB8, RAB11 and RAB27. Detected in developing rhabdomeres in photoreceptor cells.

The protein localises to the cell projection. Its subcellular location is the rhabdomere. In terms of biological role, component of the exocyst complex involved in the docking of exocytic vesicles with fusion sites on the plasma membrane. In Drosophila melanogaster (Fruit fly), this protein is Exocyst complex component 6.